A 366-amino-acid polypeptide reads, in one-letter code: Galactoside alpha-(1,2)-fucosyltransferase 1 (366 aa).

Residues 1–8 (MWPRSHRH) are Cytoplasmic-facing. The helical; Signal-anchor for type II membrane protein transmembrane segment at 9-25 (LCLAFLLVCVLSAISFL) threads the bilayer. Topologically, residues 26-366 (IHFHQDSIRH…LSPLWPLAEP (341 aa)) are lumenal. Residues N66, N302, and N328 are each glycosylated (N-linked (GlcNAc...) asparagine).

It belongs to the glycosyltransferase 11 family.

Its subcellular location is the golgi apparatus. It localises to the golgi stack membrane. It carries out the reaction a beta-D-galactosyl-(1-&gt;4)-N-acetyl-beta-D-glucosaminyl derivative + GDP-beta-L-fucose = an alpha-L-Fuc-(1-&gt;2)-beta-D-Gal-(1-&gt;4)-beta-D-GlcNAc derivative + GDP + H(+). The catalysed reaction is a ganglioside GA1 + GDP-beta-L-fucose = a ganglioside Fuc-GA1 + GDP + H(+). It catalyses the reaction a beta-D-Gal-(1-&gt;3)-beta-D-GlcNAc-(1-&gt;3)-beta-D-Gal-(1-&gt;4)-beta-D-Glc-(1&lt;-&gt;1')-Cer(d18:1(4E)) + GDP-beta-L-fucose = alpha-L-fucosyl-(1-&gt;2)- beta-D-galactosyl-(1-&gt;3)-N-acetyl-beta-D-glucosaminyl-(1-&gt;3)-beta-D-galactosyl-(1-&gt;4)-beta-D-glucosyl-(1&lt;-&gt;1')-N-acylsphing-4-enine + GDP + H(+). The enzyme catalyses a neolactoside nLc4Cer(d18:1(4E)) + GDP-beta-L-fucose = a neolactoside IV(2)-alpha-Fuc-nLc4Cer(d18:1(4E)) + GDP + H(+). It carries out the reaction a ganglioside GM1 + GDP-beta-L-fucose = a ganglioside Fuc-GM1 + GDP + H(+). The catalysed reaction is beta-D-galactosyl-(1-&gt;3)-N-acetyl-D-galactosamine + GDP-beta-L-fucose = alpha-L-fucosyl-(1-&gt;2)-beta-D-galactosyl-(1-&gt;3)-N-acetyl-D-galactosamine + GDP + H(+). Its pathway is protein modification; protein glycosylation. In terms of biological role, catalyzes the transfer of L-fucose, from a guanosine diphosphate-beta-L-fucose, to the terminal galactose residue of glycoconjugates through an alpha(1,2) linkage leading to H antigen synthesis that is an intermediate substrate in the synthesis of ABO blood group antigens. H antigen is essential for maturation of the glomerular layer of the main olfactory bulb, in cell migration and early cell-cell contacts during tumor associated angiogenesis. Preferentially fucosylates soluble lactose and to a lesser extent fucosylates glycolipids gangliosides GA1 and GM1a. In Saimiri boliviensis boliviensis (Bolivian squirrel monkey), this protein is Galactoside alpha-(1,2)-fucosyltransferase 1.